A 326-amino-acid chain; its full sequence is Glutaredoxin 3 (326 aa).

The Thioredoxin domain occupies 1-108 (MANFTDAASL…LTNKVQRLGS (108 aa)). Glutaredoxin domains lie at 125 to 227 (NQRL…VSLE) and 227 to 326 (ENRL…KGEN). The [2Fe-2S] cluster site is built by C150 and C252.

In terms of assembly, homodimer; the homodimer is independent of 2Fe-2S clusters. Heterotrimer; forms a heterotrimeric complex composed by two bola2 molecules and one glrx3 molecule; linked by [2Fe-2S] clusters.

The protein localises to the cytoplasm. It localises to the cytosol. In terms of biological role, together with bola2, acts as a cytosolic iron-sulfur (Fe-S) cluster assembly factor that facilitates [2Fe-2S] cluster insertion into a subset of cytosolic proteins. Required for hemoglobin maturation. Does not possess any thyoredoxin activity since it lacks the conserved motif that is essential for catalytic activity. The polypeptide is Glutaredoxin 3 (glrx3) (Danio rerio (Zebrafish)).